Here is a 465-residue protein sequence, read N- to C-terminus: Ribulose bisphosphate carboxylase large chain (465 aa).

An N6,N6,N6-trimethyllysine modification is found at Lys4. Substrate-binding residues include Asn113 and Thr163. The active-site Proton acceptor is Lys165. Lys167 contacts substrate. Mg(2+) is bound by residues Lys191, Asp193, and Glu194. The residue at position 191 (Lys191) is an N6-carboxylysine. Residue His284 is the Proton acceptor of the active site. Substrate is bound by residues Arg285, His317, and Ser369.

The protein belongs to the RuBisCO large chain family. Type I subfamily. In terms of assembly, heterohexadecamer of 8 large chains and 8 small chains; disulfide-linked. The disulfide link is formed within the large subunit homodimers. Mg(2+) is required as a cofactor. Post-translationally, the disulfide bond which can form in the large chain dimeric partners within the hexadecamer appears to be associated with oxidative stress and protein turnover.

It is found in the plastid. The protein localises to the chloroplast. It carries out the reaction 2 (2R)-3-phosphoglycerate + 2 H(+) = D-ribulose 1,5-bisphosphate + CO2 + H2O. The catalysed reaction is D-ribulose 1,5-bisphosphate + O2 = 2-phosphoglycolate + (2R)-3-phosphoglycerate + 2 H(+). RuBisCO catalyzes two reactions: the carboxylation of D-ribulose 1,5-bisphosphate, the primary event in carbon dioxide fixation, as well as the oxidative fragmentation of the pentose substrate in the photorespiration process. Both reactions occur simultaneously and in competition at the same active site. This chain is Ribulose bisphosphate carboxylase large chain, found in Cassia fistula (Golden shower tree).